Reading from the N-terminus, the 1706-residue chain is 5'-3' exoribonuclease 1 (1706 aa).

A Phosphoserine modification is found at Ser-1348. Residues 1619–1706 (ENKEAQSSQA…VNFGVSKPSE (88 aa)) are disordered. The span at 1623 to 1642 (AQSSQATPVQTSQPDSSNIV) shows a compositional bias: polar residues. Ser-1645 carries the phosphoserine modification. Residues 1647 to 1657 (RESSSASLKSS) show a composition bias toward low complexity. The span at 1658–1676 (PIAQPASSFQVETASQGHS) shows a compositional bias: polar residues. A compositionally biased stretch (basic residues) spans 1677-1694 (ISHHKSTPISSSRRKSRK).

The protein belongs to the 5'-3' exonuclease family. Found in a mRNP complex with UPF1, UPF2, UPF3B and XRN1. Associates with alpha and beta tubulins. Interacts with DIS3L2. Interacts with ZC3HAV1 in an RNA-dependent manner. Interacts with ZFP36L1. Interacts with TRIM71 (via NHL repeats) in an RNA-dependent manner. Interacts with YTHDC2 (via ANK repeats). Interacts with DHX34; the interaction is RNA-independent. As to expression, expressed in heart, brain, pancreas, spleen, testis, osteogenic sarcoma (OGS) biopsy and primary cell lines.

It is found in the cytoplasm. In terms of biological role, major 5'-3' exoribonuclease involved in mRNA decay. Required for the 5'-3'-processing of the G4 tetraplex-containing DNA and RNA substrates. The kinetic of hydrolysis is faster for G4 RNA tetraplex than for G4 DNA tetraplex and monomeric RNA tetraplex. Binds to RNA and DNA. Plays a role in replication-dependent histone mRNA degradation. May act as a tumor suppressor protein in osteogenic sarcoma (OGS). This Homo sapiens (Human) protein is 5'-3' exoribonuclease 1.